Consider the following 298-residue polypeptide: Probable aspartoacylase (298 aa).

H13 and E16 together coordinate Zn(2+). Residues R54 and 61-62 (NR) each bind substrate. Residue H103 participates in Zn(2+) binding. Residues E161 and Y271 each contribute to the substrate site.

Belongs to the AspA/AstE family. Aspartoacylase subfamily. It depends on Zn(2+) as a cofactor.

It catalyses the reaction an N-acyl-L-aspartate + H2O = a carboxylate + L-aspartate. This is Probable aspartoacylase from Prochlorococcus marinus (strain MIT 9515).